The following is a 144-amino-acid chain: 3-hydroxyacyl-[acyl-carrier-protein] dehydratase FabZ (144 aa).

H49 is an active-site residue.

This sequence belongs to the thioester dehydratase family. FabZ subfamily.

It localises to the cytoplasm. The enzyme catalyses a (3R)-hydroxyacyl-[ACP] = a (2E)-enoyl-[ACP] + H2O. Functionally, involved in unsaturated fatty acids biosynthesis. Catalyzes the dehydration of short chain beta-hydroxyacyl-ACPs and long chain saturated and unsaturated beta-hydroxyacyl-ACPs. In Alkaliphilus oremlandii (strain OhILAs) (Clostridium oremlandii (strain OhILAs)), this protein is 3-hydroxyacyl-[acyl-carrier-protein] dehydratase FabZ.